The chain runs to 190 residues: Adenine phosphoribosyltransferase (190 aa).

The protein belongs to the purine/pyrimidine phosphoribosyltransferase family. Homodimer.

The protein localises to the cytoplasm. It catalyses the reaction AMP + diphosphate = 5-phospho-alpha-D-ribose 1-diphosphate + adenine. It participates in purine metabolism; AMP biosynthesis via salvage pathway; AMP from adenine: step 1/1. In terms of biological role, catalyzes a salvage reaction resulting in the formation of AMP, that is energically less costly than de novo synthesis. This chain is Adenine phosphoribosyltransferase, found in Cupriavidus metallidurans (strain ATCC 43123 / DSM 2839 / NBRC 102507 / CH34) (Ralstonia metallidurans).